We begin with the raw amino-acid sequence, 89 residues long: Small ribosomal subunit protein uS17 (89 aa).

Belongs to the universal ribosomal protein uS17 family. As to quaternary structure, part of the 30S ribosomal subunit.

Functionally, one of the primary rRNA binding proteins, it binds specifically to the 5'-end of 16S ribosomal RNA. The polypeptide is Small ribosomal subunit protein uS17 (Verminephrobacter eiseniae (strain EF01-2)).